The following is a 151-amino-acid chain: UPF0756 membrane protein lhv_0995 (151 aa).

Helical transmembrane passes span 4–24, 25–45, 52–72, 78–98, and 115–135; these read WLFL…SLII, ATGV…LPVI, WGVT…QIGF, TFKS…AILS, and LVLG…GPVI.

Belongs to the UPF0756 family.

It localises to the cell membrane. The chain is UPF0756 membrane protein lhv_0995 from Lactobacillus helveticus (strain DPC 4571).